Consider the following 581-residue polypeptide: Oligo-1,6-glucosidase IMA5 (581 aa).

The active-site Nucleophile is the Asp210. Residue Glu272 is the Proton donor of the active site.

The protein belongs to the glycosyl hydrolase 13 family.

The catalysed reaction is Hydrolysis of (1-&gt;6)-alpha-D-glucosidic linkages in some oligosaccharides produced from starch and glycogen by alpha-amylase, and in isomaltose.. Its function is as follows. Alpha-glucosidase with specificity for isomaltose, maltose, and palatinose. In Saccharomyces cerevisiae (strain ATCC 204508 / S288c) (Baker's yeast), this protein is Oligo-1,6-glucosidase IMA5 (IMA5).